The chain runs to 349 residues: MIPLIPMFLKQSLFFSLALTGMTTLVLTVSLGVPVMKWLKRKNYRDYIHKEYCEKLEMLHKDKAEVPTGGGVLLFISLIASLLVWLPWGKFSTWFFIILLTCYAGLGWYDDRIKIKRKQGHGLKAKHKFMVQIAIAAFTLIALPYIYGSTEPLWTLKIPFMEGMLSLPFWLGKVFCLGLALVAIIGTSNAVNLTDGLDGLAAGTMSFAALGFIFVALRSSTIPIAQDVAYVLAALVGACIGFLWYNGFPAQLFMGDTGSLLLGGLLGSCAVMLRAECILVVIGGVFVAEAGSVILQVLSCRLRKKRLFLCSPLHHHYEYQGLPETKIVMRFWIFSFVCAGLGIAAVLWR.

Transmembrane regions (helical) follow at residues 13-33, 69-89, 91-111, 129-149, 165-185, 197-217, 228-248, 252-272, 278-298, and 327-347; these read LFFS…SLGV, GGGV…LPWG, FSTW…WYDD, FMVQ…IYGS, LSLP…VAII, LDGL…FVAL, VAYV…YNGF, LFMG…CAVM, ILVV…LQVL, and IVMR…AAVL.

This sequence belongs to the glycosyltransferase 4 family. MraY subfamily. The cofactor is Mg(2+).

It localises to the cell inner membrane. The enzyme catalyses UDP-N-acetyl-alpha-D-muramoyl-L-alanyl-gamma-D-glutamyl-meso-2,6-diaminopimeloyl-D-alanyl-D-alanine + di-trans,octa-cis-undecaprenyl phosphate = di-trans,octa-cis-undecaprenyl diphospho-N-acetyl-alpha-D-muramoyl-L-alanyl-D-glutamyl-meso-2,6-diaminopimeloyl-D-alanyl-D-alanine + UMP. It participates in cell wall biogenesis; peptidoglycan biosynthesis. Its function is as follows. Catalyzes the initial step of the lipid cycle reactions in the biosynthesis of the cell wall peptidoglycan: transfers peptidoglycan precursor phospho-MurNAc-pentapeptide from UDP-MurNAc-pentapeptide onto the lipid carrier undecaprenyl phosphate, yielding undecaprenyl-pyrophosphoryl-MurNAc-pentapeptide, known as lipid I. This Chlamydia pneumoniae (Chlamydophila pneumoniae) protein is Phospho-N-acetylmuramoyl-pentapeptide-transferase.